Consider the following 89-residue polypeptide: Small ribosomal subunit protein uS15 (89 aa).

Belongs to the universal ribosomal protein uS15 family. Part of the 30S ribosomal subunit. Forms a bridge to the 50S subunit in the 70S ribosome, contacting the 23S rRNA.

Its function is as follows. One of the primary rRNA binding proteins, it binds directly to 16S rRNA where it helps nucleate assembly of the platform of the 30S subunit by binding and bridging several RNA helices of the 16S rRNA. In terms of biological role, forms an intersubunit bridge (bridge B4) with the 23S rRNA of the 50S subunit in the ribosome. The chain is Small ribosomal subunit protein uS15 from Treponema denticola (strain ATCC 35405 / DSM 14222 / CIP 103919 / JCM 8153 / KCTC 15104).